A 153-amino-acid chain; its full sequence is MRCPFCGYEDTRVLDSRELSEGRAIRRRRECPQCHARFTTYERYETGPITVIKKDGRREKFDRKKILNGLLKAFEKRPITVDDMERIVDNIVSQLQKSGTLEVPSELIGKLVMEELRKVDQVAYVRFASVYKDFREIDQFIEVIKELRNEGQI.

The segment at 3–34 (CPFCGYEDTRVLDSRELSEGRAIRRRRECPQC) is a zinc-finger region. An ATP-cone domain is found at 49-139 (ITVIKKDGRR…VYKDFREIDQ (91 aa)).

It belongs to the NrdR family. The cofactor is Zn(2+).

Functionally, negatively regulates transcription of bacterial ribonucleotide reductase nrd genes and operons by binding to NrdR-boxes. This Fervidobacterium nodosum (strain ATCC 35602 / DSM 5306 / Rt17-B1) protein is Transcriptional repressor NrdR.